The sequence spans 469 residues: Cyclin-dependent kinase 14 (469 aa).

Ser24, Ser78, and Ser95 each carry phosphoserine. The tract at residues 103-133 is disordered; it reads FKSSSAGKESPKVRRHSSPSSPTSPKFGKAD. Residue Ser134 is modified to Phosphoserine. Residues 135–419 enclose the Protein kinase domain; it reads YEKLEKLGEG…AQAALSHEYF (285 aa). ATP is bound by residues 141-149 and Lys164; that span reads LGEGSYATV. Catalysis depends on Asp256, which acts as the Proton acceptor. The disordered stretch occupies residues 449-469; that stretch reads ESMRAFGKNNSYGKSLSNSKH. The segment covering 456–469 has biased composition (polar residues); the sequence is KNNSYGKSLSNSKH.

This sequence belongs to the protein kinase superfamily. CMGC Ser/Thr protein kinase family. CDC2/CDKX subfamily. Found in a complex with LRP6, CCNY and CAPRIN2 during G2/M stage; CAPRIN2 functions as a scaffold for the complex by binding to CCNY via its N terminus and to CDK14 via its C terminus. Interacts with CCNY; CCNY mediates its recruitment to the plasma membrane and promotes phosphorylation of LRP6. Interacts with CCDN3 and CDKN1A. Interacts with SEPT8. Interacts with 14-3-3 proteina YWHAB, YWHAE, YWHAH and YWHAQ. As to expression, in the adult, widely expressed at low levels except in brain, kidney and testis where expression is high. In the brain, detected in cortex, hippocampus, dentate gyrus, amygdala cortex, parasubiculum and cerebellum. In the embryo, expressed predominantly in the nervous system.

The protein resides in the cell membrane. It localises to the cytoplasm. It is found in the nucleus. The catalysed reaction is L-seryl-[protein] + ATP = O-phospho-L-seryl-[protein] + ADP + H(+). It catalyses the reaction L-threonyl-[protein] + ATP = O-phospho-L-threonyl-[protein] + ADP + H(+). Serine/threonine-protein kinase activity is promoted by associated cyclins CCDN3 and CCNY and repressed by CDKN1A. Its function is as follows. Serine/threonine-protein kinase involved in the control of the eukaryotic cell cycle, whose activity is controlled by an associated cyclin. Acts as a cell-cycle regulator of Wnt signaling pathway during G2/M phase by mediating the phosphorylation of LRP6 at 'Ser-1490', leading to the activation of the Wnt signaling pathway. Acts as a regulator of cell cycle progression and cell proliferation via its interaction with CCDN3. Phosphorylates RB1 in vitro, however the relevance of such result remains to be confirmed in vivo. May also play a role in meiosis, neuron differentiation and may indirectly act as a negative regulator of insulin-responsive glucose transport. This chain is Cyclin-dependent kinase 14 (Cdk14), found in Mus musculus (Mouse).